A 119-amino-acid polypeptide reads, in one-letter code: Large ribosomal subunit protein bL20 (119 aa).

This sequence belongs to the bacterial ribosomal protein bL20 family.

Functionally, binds directly to 23S ribosomal RNA and is necessary for the in vitro assembly process of the 50S ribosomal subunit. It is not involved in the protein synthesizing functions of that subunit. This chain is Large ribosomal subunit protein bL20, found in Deinococcus geothermalis (strain DSM 11300 / CIP 105573 / AG-3a).